Consider the following 477-residue polypeptide: Beta-agarase D (477 aa).

An N-terminal signal peptide occupies residues 1-20 (MKRSILLAIIAFLQFFTSYG). One can recognise a GH16 domain in the interval 22 to 378 (YDWDNVPIPA…WIRVYKPVNA (357 aa)). Residues 94–104 (MQNHVAVSGGN), 123–125 (NNT), Glu-174, Glu-179, Arg-206, and Glu-340 contribute to the substrate site. Glu-174 functions as the Nucleophile in the catalytic mechanism. The Proton donor role is filled by Glu-179. Residues 382-391 (NSAETTSTVE) are compositionally biased toward low complexity. A disordered region spans residues 382–402 (NSAETTSTVEKPASFEPQGQP).

This sequence belongs to the glycosyl hydrolase 16 family.

The protein resides in the secreted. The enzyme catalyses Hydrolysis of (1-&gt;4)-beta-D-galactosidic linkages in agarose, giving the tetramer as the predominant product.. Its function is as follows. Cleaves the beta-1,4-linkages between beta-D-galactose and alpha-L-3,6-anhydro-galactose residues in agarose. Cleaves agarose in a random manner with retention of the anomeric-bond configuration, producing beta-anomers that give rise progressively to alpha-anomers when mutarotation takes place. Requires at least 4 consecutive agarose units and is highly intolerant to modifications. This chain is Beta-agarase D (agaD), found in Zobellia galactanivorans (strain DSM 12802 / CCUG 47099 / CIP 106680 / NCIMB 13871 / Dsij).